The sequence spans 393 residues: Squamosa promoter-binding-like protein 11 (393 aa).

The disordered stretch occupies residues 74-96 (QSTSINSSSPEAKRCKLASESSP). Residues 172 to 249 (VPRCQIDGCE…SHHNARRRKP (78 aa)) form an SBP-type zinc finger. The Zn(2+) site is built by C175, C180, C197, H200, C216, C219, H223, and C235. Positions 232–248 (KRSCRKRLSHHNARRRK) match the Bipartite nuclear localization signal motif.

Zn(2+) is required as a cofactor.

The protein localises to the nucleus. Functionally, trans-acting factor that binds specifically to the consensus nucleotide sequence 5'-TNCGTACAA-3'. The chain is Squamosa promoter-binding-like protein 11 (SPL11) from Arabidopsis thaliana (Mouse-ear cress).